A 417-amino-acid polypeptide reads, in one-letter code: MTPYIVILSTGSELTAGRSVDTNSGWIANQLFELGWKVKKIITLPDDPNLIFKELEALQSLAKEIPVLAIMTGGLGPTEDDYTLETVLKLTGKTSYAVEKAKIRLTKIYEARGKDYKDILPTVFRQTNVPEGCKTLDNSVGIAVGFIESLGENSYLVCMPGVPSEMTEMFKRRLVPELKKMYPRENLIQKTKWLWNIGESLFQNEFIEPNREVYFKETEWGVTANRGYIKCIFQSTNDVMLDTILKSLEKQYPDLISDDVFQYVHEQLLYEKWTISVVESCTGGLLGKKLTERAGSSAYFMGGFLTYSNEMKSNLLGIPKETIETFGAVSDEVAFAMVDGLCLKTGTDFGVSITGIAGPEGGSEEKPVGTVCIGLKEPNGKIKVHRYLFPGNRESIRENASNTALFLIYQSLKGKVV.

It belongs to the CinA family.

The polypeptide is CinA-like protein (Leptospira biflexa serovar Patoc (strain Patoc 1 / Ames)).